The sequence spans 227 residues: Homeobox protein HD-10 (227 aa).

The homeobox DNA-binding region spans 30–89; the sequence is FVKHRKRTTKAQLKVLEETFETNIRPDANMRKKLGEQLGMTPRSVQVWFQNRRAKIKKLT. A disordered region spans residues 88–115; it reads LTQKKMMQQENTDNTKGPDAAHGSSSPK. Polar residues predominate over residues 92–102; sequence KMMQQENTDNT.

The protein localises to the nucleus. The sequence is that of Homeobox protein HD-10 (HD-10) from Encephalitozoon cuniculi (strain GB-M1) (Microsporidian parasite).